Consider the following 322-residue polypeptide: CXXC-type zinc finger protein 5 (322 aa).

Gly residues predominate over residues 1 to 10; sequence MSSLGGGSQD. The segment at 1-100 is disordered; sequence MSSLGGGSQD…SGGGSMMGGE (100 aa). 2 stretches are compositionally biased toward low complexity: residues 11-20 and 28-52; these read AGGSSSSSTN and SGPK…VADD. Threonine 53 is subject to Phosphothreonine. Residues 87 to 97 are compositionally biased toward gly residues; that stretch reads SSGGSGGGSMM. A CXXC-type zinc finger spans residues 256–297; it reads GKKKRKRCGMCAPCRRRINCEQCSSCRNRKTGHQICKFRKCE. A Nuclear localization signal motif is present at residues 257–262; it reads KKKRKR. Cysteine 263, cysteine 266, cysteine 269, cysteine 275, cysteine 278, cysteine 281, cysteine 291, and cysteine 296 together coordinate Zn(2+).

As to quaternary structure, interacts with DVL1. Interacts with RBPJ.

It is found in the nucleus. Its subcellular location is the cytoplasm. Its function is as follows. May indirectly participate in activation of the NF-kappa-B and MAPK pathways. Acts as a mediator of BMP4-mediated modulation of canonical Wnt signaling activity in neural stem cells. Required for DNA damage-induced ATM phosphorylation, p53 activation and cell cycle arrest. Involved in myelopoiesis. Binds to the oxygen responsive element of COX4I2 and represses its transcription under hypoxia conditions (4% oxygen), as well as normoxia conditions (20% oxygen). May repress COX4I2 transactivation induced by CHCHD2 and RBPJ. Binds preferentially to DNA containing cytidine-phosphate-guanosine (CpG) dinucleotides over CpH (H=A, T, and C), hemimethylated-CpG and hemimethylated-hydroxymethyl-CpG. In Pongo abelii (Sumatran orangutan), this protein is CXXC-type zinc finger protein 5 (CXXC5).